Consider the following 131-residue polypeptide: Fumarate reductase subunit C (131 aa).

3 consecutive transmembrane segments (helical) span residues 30–50, 63–83, and 109–129; these read EGTAVPAVWFSIELIFGLFAL, FLQNPVIVIINLITLAAALLH, and IIKSLWAVTVVATIVILFVAL.

It belongs to the FrdC family. As to quaternary structure, part of an enzyme complex containing four subunits: a flavoprotein (FrdA), an iron-sulfur protein (FrdB), and two hydrophobic anchor proteins (FrdC and FrdD).

It localises to the cell inner membrane. Its function is as follows. Two distinct, membrane-bound, FAD-containing enzymes are responsible for the catalysis of fumarate and succinate interconversion; fumarate reductase is used in anaerobic growth, and succinate dehydrogenase is used in aerobic growth. Anchors the catalytic components of the fumarate reductase complex to the cell inner membrane, binds quinones. The sequence is that of Fumarate reductase subunit C from Escherichia coli O17:K52:H18 (strain UMN026 / ExPEC).